The sequence spans 466 residues: Asparagine--tRNA ligase (466 aa).

It belongs to the class-II aminoacyl-tRNA synthetase family. Homodimer.

Its subcellular location is the cytoplasm. It carries out the reaction tRNA(Asn) + L-asparagine + ATP = L-asparaginyl-tRNA(Asn) + AMP + diphosphate + H(+). The chain is Asparagine--tRNA ligase from Shewanella halifaxensis (strain HAW-EB4).